We begin with the raw amino-acid sequence, 767 residues long: uncharacterized protein (767 aa).

Disordered stretches follow at residues 171–209 (LPVWPGGPGRPGPHAPEAGAEGQHQGQWPPADTRHLRTP), 314–340 (ETEAPGVRPDPRPEKDAKPAVSGCQEE), and 533–566 (RDHGPPGSSCRSQRKGNGVETKDQAHRNRDPRGF). Basic and acidic residues-rich tracts occupy residues 322 to 331 (PDPRPEKDAK) and 552 to 564 (ETKDQAHRNRDPR).

This is an uncharacterized protein from Homo sapiens (Human).